Consider the following 119-residue polypeptide: Iron-sulfur cluster insertion protein ErpA (119 aa).

Iron-sulfur cluster contacts are provided by Cys-47, Cys-111, and Cys-113.

Belongs to the HesB/IscA family. In terms of assembly, homodimer. Iron-sulfur cluster is required as a cofactor.

Its function is as follows. Required for insertion of 4Fe-4S clusters for at least IspG. This is Iron-sulfur cluster insertion protein ErpA from Blochmanniella floridana.